The chain runs to 431 residues: Phosphoribosylamine--glycine ligase (431 aa).

An ATP-grasp domain is found at 108–315 (KDFLARHKIP…LVLLIEAALA (208 aa)). 134 to 195 (LREKGAPIVI…EEFLDGEEAS (62 aa)) serves as a coordination point for ATP. Mg(2+) contacts are provided by Glu285 and Asn287.

This sequence belongs to the GARS family. Requires Mg(2+) as cofactor. Mn(2+) serves as cofactor.

The enzyme catalyses 5-phospho-beta-D-ribosylamine + glycine + ATP = N(1)-(5-phospho-beta-D-ribosyl)glycinamide + ADP + phosphate + H(+). It participates in purine metabolism; IMP biosynthesis via de novo pathway; N(1)-(5-phospho-D-ribosyl)glycinamide from 5-phospho-alpha-D-ribose 1-diphosphate: step 2/2. The sequence is that of Phosphoribosylamine--glycine ligase from Pseudomonas syringae pv. tomato (strain ATCC BAA-871 / DC3000).